Here is a 135-residue protein sequence, read N- to C-terminus: Large ribosomal subunit protein uL22 (135 aa).

This sequence belongs to the universal ribosomal protein uL22 family. Part of the 50S ribosomal subunit.

This protein binds specifically to 23S rRNA; its binding is stimulated by other ribosomal proteins, e.g. L4, L17, and L20. It is important during the early stages of 50S assembly. It makes multiple contacts with different domains of the 23S rRNA in the assembled 50S subunit and ribosome. Its function is as follows. The globular domain of the protein is located near the polypeptide exit tunnel on the outside of the subunit, while an extended beta-hairpin is found that lines the wall of the exit tunnel in the center of the 70S ribosome. This chain is Large ribosomal subunit protein uL22, found in Christiangramia forsetii (strain DSM 17595 / CGMCC 1.15422 / KT0803) (Gramella forsetii).